A 469-amino-acid chain; its full sequence is Arginine biosynthesis bifunctional protein ArgJ, chloroplastic (469 aa).

The substrate site is built by Thr-213, Lys-239, Thr-250, Glu-337, Asn-464, and Thr-469. Catalysis depends on Thr-250, which acts as the Nucleophile.

It belongs to the ArgJ family. In terms of assembly, heterodimer of an alpha and a beta chain.

The protein resides in the plastid. The protein localises to the chloroplast. The enzyme catalyses N(2)-acetyl-L-ornithine + L-glutamate = N-acetyl-L-glutamate + L-ornithine. It catalyses the reaction L-glutamate + acetyl-CoA = N-acetyl-L-glutamate + CoA + H(+). It participates in amino-acid biosynthesis; L-arginine biosynthesis; L-ornithine and N-acetyl-L-glutamate from L-glutamate and N(2)-acetyl-L-ornithine (cyclic): step 1/1. The protein operates within amino-acid biosynthesis; L-arginine biosynthesis; N(2)-acetyl-L-ornithine from L-glutamate: step 1/4. Its function is as follows. Catalyzes two activities which are involved in the cyclic version of arginine biosynthesis: the synthesis of acetylglutamate from glutamate and acetyl-CoA, and of ornithine by transacetylation between acetylornithine and glutamate. In Ricinus communis (Castor bean), this protein is Arginine biosynthesis bifunctional protein ArgJ, chloroplastic.